The sequence spans 255 residues: Indole-3-glycerol phosphate synthase (255 aa).

The protein belongs to the TrpC family.

It carries out the reaction 1-(2-carboxyphenylamino)-1-deoxy-D-ribulose 5-phosphate + H(+) = (1S,2R)-1-C-(indol-3-yl)glycerol 3-phosphate + CO2 + H2O. Its pathway is amino-acid biosynthesis; L-tryptophan biosynthesis; L-tryptophan from chorismate: step 4/5. The polypeptide is Indole-3-glycerol phosphate synthase (Streptococcus pneumoniae (strain Taiwan19F-14)).